The following is a 328-amino-acid chain: Biotin synthase (328 aa).

The Radical SAM core domain occupies 51–282 (FNGNHVDLCS…DKIIRYAGGR (232 aa)). [4Fe-4S] cluster is bound by residues cysteine 69, cysteine 73, and cysteine 76. Residues cysteine 112, cysteine 147, cysteine 207, and arginine 277 each coordinate [2Fe-2S] cluster.

This sequence belongs to the radical SAM superfamily. Biotin synthase family. In terms of assembly, homodimer. [4Fe-4S] cluster serves as cofactor. It depends on [2Fe-2S] cluster as a cofactor.

The enzyme catalyses (4R,5S)-dethiobiotin + (sulfur carrier)-SH + 2 reduced [2Fe-2S]-[ferredoxin] + 2 S-adenosyl-L-methionine = (sulfur carrier)-H + biotin + 2 5'-deoxyadenosine + 2 L-methionine + 2 oxidized [2Fe-2S]-[ferredoxin]. It participates in cofactor biosynthesis; biotin biosynthesis; biotin from 7,8-diaminononanoate: step 2/2. Functionally, catalyzes the conversion of dethiobiotin (DTB) to biotin by the insertion of a sulfur atom into dethiobiotin via a radical-based mechanism. In Clostridium acetobutylicum (strain ATCC 824 / DSM 792 / JCM 1419 / IAM 19013 / LMG 5710 / NBRC 13948 / NRRL B-527 / VKM B-1787 / 2291 / W), this protein is Biotin synthase.